The primary structure comprises 59 residues: Large ribosomal subunit protein uL30 (59 aa).

The protein belongs to the universal ribosomal protein uL30 family. As to quaternary structure, part of the 50S ribosomal subunit.

This chain is Large ribosomal subunit protein uL30, found in Photorhabdus laumondii subsp. laumondii (strain DSM 15139 / CIP 105565 / TT01) (Photorhabdus luminescens subsp. laumondii).